Here is a 521-residue protein sequence, read N- to C-terminus: Ribonuclease Y (521 aa).

The chain crosses the membrane as a helical span at residues 5 to 25; that stretch reads TVWILISILLATVGAVVGFFV. Positions 87–117 are disordered; it reads KQENRLMQKEENLDRKDETLDNRERQLEKKE. In terms of domain architecture, KH spans 211–274; that stretch reads TVSVVNLPND…ETARIALDKL (64 aa). The HD domain occupies 337–430; it reads VLKHSMEVAY…VAAADALSAA (94 aa).

The protein belongs to the RNase Y family.

The protein resides in the cell membrane. Endoribonuclease that initiates mRNA decay. The polypeptide is Ribonuclease Y (Bacillus mycoides (strain KBAB4) (Bacillus weihenstephanensis)).